A 164-amino-acid polypeptide reads, in one-letter code: CDP-archaeol synthase (164 aa).

4 consecutive transmembrane segments (helical) span residues L3 to A23, G53 to P73, L77 to I97, and S126 to I146.

It belongs to the CDP-archaeol synthase family. It depends on Mg(2+) as a cofactor.

Its subcellular location is the cell membrane. The enzyme catalyses 2,3-bis-O-(geranylgeranyl)-sn-glycerol 1-phosphate + CTP + H(+) = CDP-2,3-bis-O-(geranylgeranyl)-sn-glycerol + diphosphate. It participates in membrane lipid metabolism; glycerophospholipid metabolism. Its function is as follows. Catalyzes the formation of CDP-2,3-bis-(O-geranylgeranyl)-sn-glycerol (CDP-archaeol) from 2,3-bis-(O-geranylgeranyl)-sn-glycerol 1-phosphate (DGGGP) and CTP. This reaction is the third ether-bond-formation step in the biosynthesis of archaeal membrane lipids. The sequence is that of CDP-archaeol synthase from Pyrobaculum arsenaticum (strain DSM 13514 / JCM 11321 / PZ6).